An 817-amino-acid polypeptide reads, in one-letter code: Protein EFR3 homolog B (817 aa).

Phosphoserine is present on residues S212, S214, and S216.

Belongs to the EFR3 family. As to quaternary structure, component of a phosphatidylinositol 4-kinase (PI4K) complex, composed of PI4KA, EFR3 (EFR3A or EFR3B), TTC7 (TTC7A or TTC7B) and HYCC (HYCC1 or HYCC2). Post-translationally, palmitoylated at its N-terminus, anchoring the protein to the plasma membrane. In terms of tissue distribution, widely expressed.

It is found in the cell membrane. The protein resides in the cytoplasm. The protein localises to the cytosol. Its function is as follows. Component of a complex required to localize phosphatidylinositol 4-kinase (PI4K) to the plasma membrane. The complex acts as a regulator of phosphatidylinositol 4-phosphate (PtdIns(4)P) synthesis. In the complex, EFR3B probably acts as the membrane-anchoring component. Also involved in responsiveness to G-protein-coupled receptors; it is however unclear whether this role is direct or indirect. The sequence is that of Protein EFR3 homolog B (Efr3b) from Mus musculus (Mouse).